An 802-amino-acid polypeptide reads, in one-letter code: Leucine--tRNA ligase (802 aa).

The short motif at 40-51 (PYPSGAGLHVGH) is the 'HIGH' region element. A 'KMSKS' region motif is present at residues 576–580 (KMSKS). K579 is an ATP binding site.

This sequence belongs to the class-I aminoacyl-tRNA synthetase family.

The protein resides in the cytoplasm. The catalysed reaction is tRNA(Leu) + L-leucine + ATP = L-leucyl-tRNA(Leu) + AMP + diphosphate. This chain is Leucine--tRNA ligase, found in Bacillus mycoides (strain KBAB4) (Bacillus weihenstephanensis).